The sequence spans 455 residues: Notoamide E oxidase notB' (455 aa).

Residues 11-31 (PAILSPADLTVIIVGLGIAGL) traverse the membrane as a helical segment. Residues Glu48 and Gly61 each contribute to the FAD site. Asn75 is a glycosylation site (N-linked (GlcNAc...) asparagine). An FAD-binding site is contributed by Arg121. Residues Arg199 and Tyr229 contribute to the active site. The FAD site is built by Asp324 and Gly337.

It belongs to the paxM FAD-dependent monooxygenase family. FAD is required as a cofactor.

Its subcellular location is the membrane. The enzyme catalyses notoamide E + NADPH + O2 + H(+) = notoamide C + NADP(+) + H2O. The catalysed reaction is notoamide E + NADPH + O2 + H(+) = notoamide D + NADP(+) + H2O. It functions in the pathway alkaloid biosynthesis. Its function is as follows. FAD-dependent monooxygenase; part of the gene cluster that mediates the biosynthesis of notoamide, a fungal indole alkaloid that belongs to a family of natural products containing a characteristic bicyclo[2.2.2]diazaoctane core. The first step of notoamide biosynthesis involves coupling of L-proline and L-tryptophan by the bimodular NRPS notE', to produce cyclo-L-tryptophan-L-proline called brevianamide F. The reverse prenyltransferase notF' then acts as a deoxybrevianamide E synthase and converts brevianamide F to deoxybrevianamide E via reverse prenylation at C-2 of the indole ring leading to the bicyclo[2.2.2]diazaoctane core. Deoxybrevianamide E is further hydroxylated at C-6 of the indole ring, likely catalyzed by the cytochrome P450 monooxygenase notG', to yield 6-hydroxy-deoxybrevianamide E. 6-hydroxy-deoxybrevianamide E is a specific substrate of the prenyltransferase notC' for normal prenylation at C-7 to produce 6-hydroxy-7-prenyl-deoxybrevianamide, also called notoamide S. As the proposed pivotal branching point in notoamide biosynthesis, notoamide S can be diverted to notoamide E through an oxidative pyran ring closure putatively catalyzed by either notH' cytochrome P450 monooxygenase or the notD' FAD-linked oxidoreductase. This step would be followed by an indole 2,3-epoxidation-initiated pinacol-like rearrangement catalyzed by the notB' FAD-dependent monooxygenase leading to the formation of notoamide C and notoamide D. On the other hand notoamide S is converted to notoamide T by notH' (or notD'), a bifunctional oxidase that also functions as the intramolecular Diels-Alderase responsible for generation of (-)-notoamide T. To generate antipodal (+)-notoaminide T, notH (or notD) in Aspergillus strain MF297-2 is expected to catalyze a Diels-Alder reaction leading to the opposite stereochemistry. The remaining oxidoreductase notD' (or notH') likely catalyzes the oxidative pyran ring formation to yield (-)-stephacidin A. The FAD-dependent monooxygenase notI' is highly similar to notB' and is predicted to catalyze a similar conversion from (-)-stephacidin A to (+)-notoamide B via the 2,3-epoxidation of (-)-stephacidin A followed by a pinacol-type rearrangement. Finally, it remains unclear which enzyme could be responsible for the final hydroxylation steps leading to notoamide A and sclerotiamide. The chain is Notoamide E oxidase notB' from Aspergillus versicolor.